The sequence spans 591 residues: CTP synthase (591 aa).

An amidoligase domain region spans residues 1 to 281 (MPQSRTHSRT…DAYVVRQLGL (281 aa)). Position 23 (serine 23) interacts with CTP. Serine 23 contacts UTP. Residues 24-29 (SLGKGL) and aspartate 81 contribute to the ATP site. Residues aspartate 81 and glutamate 155 each contribute to the Mg(2+) site. CTP-binding positions include 162-164 (DIE), 202-207 (KTKPTQ), and lysine 238. UTP contacts are provided by residues 202–207 (KTKPTQ) and lysine 238. The Glutamine amidotransferase type-1 domain maps to 306–554 (RIALVGKYVD…VDAALKHKLE (249 aa)). L-glutamine is bound at residue glycine 369. Cysteine 396 functions as the Nucleophile; for glutamine hydrolysis in the catalytic mechanism. L-glutamine is bound by residues 397 to 400 (LGLQ), glutamate 419, and arginine 480. Catalysis depends on residues histidine 527 and glutamate 529. The segment at 568–591 (AVATDDELADSADRDEVASVDSAG) is disordered.

Belongs to the CTP synthase family. As to quaternary structure, homotetramer.

It catalyses the reaction UTP + L-glutamine + ATP + H2O = CTP + L-glutamate + ADP + phosphate + 2 H(+). The enzyme catalyses L-glutamine + H2O = L-glutamate + NH4(+). It carries out the reaction UTP + NH4(+) + ATP = CTP + ADP + phosphate + 2 H(+). It participates in pyrimidine metabolism; CTP biosynthesis via de novo pathway; CTP from UDP: step 2/2. Its activity is regulated as follows. Allosterically activated by GTP, when glutamine is the substrate; GTP has no effect on the reaction when ammonia is the substrate. The allosteric effector GTP functions by stabilizing the protein conformation that binds the tetrahedral intermediate(s) formed during glutamine hydrolysis. Inhibited by the product CTP, via allosteric rather than competitive inhibition. Catalyzes the ATP-dependent amination of UTP to CTP with either L-glutamine or ammonia as the source of nitrogen. Regulates intracellular CTP levels through interactions with the four ribonucleotide triphosphates. The protein is CTP synthase of Rhodococcus jostii (strain RHA1).